Reading from the N-terminus, the 540-residue chain is Putative BTB/POZ domain-containing protein R224 (540 aa).

A BTB domain is found at 16–88; that stretch reads TDLELTLIDE…FYKNPIKYKN (73 aa). A helical transmembrane segment spans residues 356 to 376; that stretch reads IFVSLLNDIIFVLSSINMYFI.

The protein belongs to the mimivirus BTB/WD family.

It is found in the membrane. The chain is Putative BTB/POZ domain-containing protein R224 from Acanthamoeba polyphaga (Amoeba).